The chain runs to 763 residues: Elongation factor G, mitochondrial (763 aa).

A mitochondrion-targeting transit peptide spans 1 to 52; it reads MFMRLKVLEMNSIRRQTLLRQFTNVYNVVSRSARLCSQAIPKRLFYSTGSRA. The region spanning 60–347 is the tr-type G domain; the sequence is SRLRNIGISA…AVCDYLPNPS (288 aa). GTP is bound by residues 69 to 76, 145 to 149, and 199 to 202; these read AHIDSGKT, DTPGH, and NKMD.

It belongs to the TRAFAC class translation factor GTPase superfamily. Classic translation factor GTPase family. EF-G/EF-2 subfamily.

The protein localises to the mitochondrion. The protein operates within protein biosynthesis; polypeptide chain elongation. Mitochondrial GTPase that catalyzes the GTP-dependent ribosomal translocation step during translation elongation. During this step, the ribosome changes from the pre-translocational (PRE) to the post-translocational (POST) state as the newly formed A-site-bound peptidyl-tRNA and P-site-bound deacylated tRNA move to the P and E sites, respectively. Catalyzes the coordinated movement of the two tRNA molecules, the mRNA and conformational changes in the ribosome. This chain is Elongation factor G, mitochondrial (mef1), found in Schizosaccharomyces japonicus (strain yFS275 / FY16936) (Fission yeast).